A 172-amino-acid chain; its full sequence is Cytidylate kinase (172 aa).

Residue 8 to 16 participates in ATP binding; that stretch reads GPPGSGKST.

It belongs to the cytidylate kinase family. Type 2 subfamily.

The protein resides in the cytoplasm. It catalyses the reaction CMP + ATP = CDP + ADP. The catalysed reaction is dCMP + ATP = dCDP + ADP. The protein is Cytidylate kinase of Ignicoccus hospitalis (strain KIN4/I / DSM 18386 / JCM 14125).